Reading from the N-terminus, the 298-residue chain is Sulfofructose kinase (298 aa).

5 residues coordinate 6-deoxy-6-sulfo-D-fructose: Asp-13, Lys-27, Gly-39, Ser-95, and Arg-138. ATP contacts are provided by Thr-212, Gly-214, Gly-217, and Gly-243. Asp-244 provides a ligand contact to 6-deoxy-6-sulfo-D-fructose.

Belongs to the carbohydrate kinase PfkB family. As to quaternary structure, homodimer.

It carries out the reaction 6-deoxy-6-sulfo-D-fructose + ATP = 6-deoxy-6-sulfo-D-fructose 1-phosphate + ADP + H(+). With respect to regulation, strongly inhibited by ADP. Activated by sulfoquinovose (SQ), sulfolactaldehyde (SLA) and dihydroxyacetone phosphate (DHAP) (through effects on KM) and by fructose 6-phosphate (F6P), fructose bisphosphate (FBP), phosphoenolpyruvate (PEP) and citrate (through effects on kcat/KM). Functionally, phosphorylates 6-deoxy-6-sulfo-D-fructose (SF) to 6-deoxy-6-sulfo-D-fructose 1-phosphate (SFP). Cannot phosphorylate fructose 6-phosphate. This chain is Sulfofructose kinase (yihV), found in Escherichia coli (strain K12).